The chain runs to 202 residues: Prohormone-4 (202 aa).

The first 28 residues, 1–28 (MVQRLCTSVAALSLALSACVFFPRAVMA), serve as a signal peptide directing secretion. Residues 46 to 86 (ACRPYEPFKCPGDDTCISIQYLCDGAPDCQDGYDEDSRLCT) form the LDL-receptor class A domain. 3 cysteine pairs are disulfide-bonded: Cys47–Cys61, Cys55–Cys74, and Cys68–Cys85.

The protein localises to the secreted. This Apis mellifera (Honeybee) protein is Prohormone-4.